The following is a 632-amino-acid chain: Threonine--tRNA ligase (632 aa).

The 61-residue stretch at 1-61 folds into the TGS domain; the sequence is MPIITLPDGT…KTDANLAIIT (61 aa). Positions 242-533 are catalytic; it reads DHRKIGKIQD…LIEHYEGAYP (292 aa). 3 residues coordinate Zn(2+): C333, H384, and H510.

It belongs to the class-II aminoacyl-tRNA synthetase family. As to quaternary structure, homodimer. Requires Zn(2+) as cofactor.

It is found in the cytoplasm. The catalysed reaction is tRNA(Thr) + L-threonine + ATP = L-threonyl-tRNA(Thr) + AMP + diphosphate + H(+). Catalyzes the attachment of threonine to tRNA(Thr) in a two-step reaction: L-threonine is first activated by ATP to form Thr-AMP and then transferred to the acceptor end of tRNA(Thr). Also edits incorrectly charged L-seryl-tRNA(Thr). The protein is Threonine--tRNA ligase of Ruthia magnifica subsp. Calyptogena magnifica.